Reading from the N-terminus, the 131-residue chain is D-ribose pyranase (131 aa).

The active-site Proton donor is the His20. Substrate-binding positions include Asp28, His98, and 120–122 (YAN).

Belongs to the RbsD / FucU family. RbsD subfamily. In terms of assembly, homodecamer.

It localises to the cytoplasm. The enzyme catalyses beta-D-ribopyranose = beta-D-ribofuranose. The protein operates within carbohydrate metabolism; D-ribose degradation; D-ribose 5-phosphate from beta-D-ribopyranose: step 1/2. In terms of biological role, catalyzes the interconversion of beta-pyran and beta-furan forms of D-ribose. In Bacillus mycoides (strain KBAB4) (Bacillus weihenstephanensis), this protein is D-ribose pyranase.